A 310-amino-acid polypeptide reads, in one-letter code: Methionyl-tRNA formyltransferase (310 aa).

111–114 (SLLP) serves as a coordination point for (6S)-5,6,7,8-tetrahydrofolate.

It belongs to the Fmt family.

It carries out the reaction L-methionyl-tRNA(fMet) + (6R)-10-formyltetrahydrofolate = N-formyl-L-methionyl-tRNA(fMet) + (6S)-5,6,7,8-tetrahydrofolate + H(+). Attaches a formyl group to the free amino group of methionyl-tRNA(fMet). The formyl group appears to play a dual role in the initiator identity of N-formylmethionyl-tRNA by promoting its recognition by IF2 and preventing the misappropriation of this tRNA by the elongation apparatus. The chain is Methionyl-tRNA formyltransferase from Rhodopseudomonas palustris (strain ATCC BAA-98 / CGA009).